The primary structure comprises 473 residues: Ribulose bisphosphate carboxylase large chain (473 aa).

Positions 1–2 (MS) are excised as a propeptide. Residue proline 3 is modified to N-acetylproline. At lysine 14 the chain carries N6,N6,N6-trimethyllysine. The substrate site is built by asparagine 123 and threonine 173. Lysine 175 functions as the Proton acceptor in the catalytic mechanism. Lysine 177 serves as a coordination point for substrate. 3 residues coordinate Mg(2+): lysine 201, aspartate 203, and glutamate 204. N6-carboxylysine is present on lysine 201. The active-site Proton acceptor is histidine 294. Substrate-binding residues include arginine 295, histidine 327, and serine 379.

This sequence belongs to the RuBisCO large chain family. Type I subfamily. In terms of assembly, heterohexadecamer of 8 large chains and 8 small chains; disulfide-linked. The disulfide link is formed within the large subunit homodimers. Mg(2+) serves as cofactor. The disulfide bond which can form in the large chain dimeric partners within the hexadecamer appears to be associated with oxidative stress and protein turnover.

Its subcellular location is the plastid. It is found in the chloroplast. It catalyses the reaction 2 (2R)-3-phosphoglycerate + 2 H(+) = D-ribulose 1,5-bisphosphate + CO2 + H2O. The catalysed reaction is D-ribulose 1,5-bisphosphate + O2 = 2-phosphoglycolate + (2R)-3-phosphoglycerate + 2 H(+). RuBisCO catalyzes two reactions: the carboxylation of D-ribulose 1,5-bisphosphate, the primary event in carbon dioxide fixation, as well as the oxidative fragmentation of the pentose substrate in the photorespiration process. Both reactions occur simultaneously and in competition at the same active site. The sequence is that of Ribulose bisphosphate carboxylase large chain from Sesbania sesban (Egyptian riverhemp).